The chain runs to 1856 residues: Zinc metalloprotease ZmpC (1856 aa).

The first 42 residues, 1-42 (MSRKSIGEKRHSFSMRKLSVGLVSVTVSSFFLMSQGIQSVSA), serve as a signal peptide directing secretion. Positions 43–95 (DNMESPIHYKYMTEGKLTDEEKSLLVEALPQLAEESDDTYYLVYRSQQFLPNT) are excised as a propeptide. Positions 92-96 (LPNTG) match the LPXTG sorting signal motif. Thr95 is subject to Pentaglycyl murein peptidoglycan amidated threonine. 2 helical membrane-spanning segments follow: residues 97–117 (FNPT…VLLV) and 130–152 (FLLL…TSQI). Over 153–1856 (LSAYNSQLSI…TDDFRNSIYK (1704 aa)) the chain is Extracellular. Composition is skewed to polar residues over residues 254–267 (NLSS…QVEQ) and 286–295 (NPVSATTVQS). Residues 254–362 (NLSSNDSFAS…GEAAVREEEP (109 aa)) are disordered. Basic and acidic residues-rich tracts occupy residues 322–334 (PGHE…REDL) and 351–361 (HEGEAAVREEE). The region spanning 417–496 (ALEVTTRNRT…NEVVKVGTLV (80 aa)) is the G5 domain. His1502 is a Zn(2+) binding site. The active site involves Glu1503. His1506 and Glu1526 together coordinate Zn(2+).

It belongs to the peptidase M26 family. Zn(2+) is required as a cofactor. In terms of processing, the Gram-positive cell-wall anchor motif LPXTG is located in the N-terminal part, in contrast to such motifs in other known streptococcal and staphylococcal proteins. The protease could be cleaved by the sortase and anchored in the membrane via the two potential N-terminal transmembrane domains, whereas the propeptide located prior to the LPXTG motif would remain attached to the cell wall peptidoglycan by an amide bond.

Its subcellular location is the secreted. The protein resides in the cell wall. It is found in the membrane. Functionally, zinc metalloproteinase that specifically cleaves human matrix metalloproteinase 9 (MMP-9), leading to its activation. May play a role in pneumococcal virulence and pathogenicity in the lung. The polypeptide is Zinc metalloprotease ZmpC (zmpC) (Streptococcus pneumoniae serotype 4 (strain ATCC BAA-334 / TIGR4)).